A 417-amino-acid polypeptide reads, in one-letter code: MNILVLNCGSSSVKFRLIHTYFDLIRENKDYSIASGLIERVGSEGLLSFRSTNAQGEVLSTLRTTAPVRTHQAAIDQIIKWITSENSGIQGIQSLEDIHAVGHRVVHGGEKLTRSVLIDDSVVEQIEDCIELAPLHNPQNLKGIYAAKKTFGPNIPQVAVFDTAFHHTLPDHAYLYALPYQIYRRHRIRRYGFHGLSHRYVRFRYRTILGMERENVNIISLHLGNGCSACAIKNGNSIDTSMGMTPLEGLVMGTRAGDVDPAILTYLAHKEGHSLDDLDKLLNSQSGLLGISGLTNDMRELIEESLENDDRRAKLALEIFAYRIKKYVGAYLSAMNGADAIIFTGGIGENADFIRQKICAGMNWCGIEIDENLNKQTTRGREGRISPDGNKPEVWVIPTNEELVIARDTYRCVMRKE.

N7 lines the Mg(2+) pocket. Residue K14 participates in ATP binding. R104 provides a ligand contact to substrate. The active-site Proton donor/acceptor is the D162. Residues 222-226 (HLGNG), 297-299 (DMR), and 346-350 (GIGEN) contribute to the ATP site. E401 lines the Mg(2+) pocket.

This sequence belongs to the acetokinase family. As to quaternary structure, homodimer. Requires Mg(2+) as cofactor. Mn(2+) is required as a cofactor.

It localises to the cytoplasm. It catalyses the reaction acetate + ATP = acetyl phosphate + ADP. It participates in metabolic intermediate biosynthesis; acetyl-CoA biosynthesis; acetyl-CoA from acetate: step 1/2. Functionally, catalyzes the formation of acetyl phosphate from acetate and ATP. Can also catalyze the reverse reaction. This Chloroherpeton thalassium (strain ATCC 35110 / GB-78) protein is Acetate kinase.